A 633-amino-acid polypeptide reads, in one-letter code: NADPH-dependent diflavin oxidoreductase 1 (633 aa).

The Flavodoxin-like domain occupies 5–149; it reads CTIIYATESG…EVEKWSQELI (145 aa). FMN contacts are provided by residues 11-16, 58-61, and D131; these read TESGTS and STTG. Positions 196-442 constitute an FAD-binding FR-type domain; sequence TQFYKSKLKV…FIKESGARLP (247 aa). FAD-binding positions include 377–380 and 412–415; these read RPFS and GLCS. NADP(+) contacts are provided by residues T456, 520–521, 528–532, and D565; these read SR and KVYVQ. The tract at residues 580–610 is disordered; it reads KNNNNNNNNNNNNNNNNNNNNNNNNNDDENN. Residues 581–604 show a composition bias toward low complexity; that stretch reads NNNNNNNNNNNNNNNNNNNNNNNN. W633 contacts FAD.

The protein belongs to the NADPH-dependent diflavin oxidoreductase NDOR1 family. This sequence in the N-terminal section; belongs to the flavodoxin family. In the C-terminal section; belongs to the flavoprotein pyridine nucleotide cytochrome reductase family. FAD serves as cofactor. FMN is required as a cofactor.

It is found in the cytoplasm. It carries out the reaction 2 oxidized [2Fe-2S]-[protein] + NADPH = 2 reduced [2Fe-2S]-[protein] + NADP(+) + H(+). Functionally, NADPH-dependent reductase which is a central component of the cytosolic iron-sulfur (Fe-S) protein assembly (CIA) machinery. Transfers electrons from NADPH via its FAD and FMN prosthetic groups to the [2Fe-2S] cluster of the anamorsin/DRE2 homolog, another key component of the CIA machinery. In turn, this reduced cluster provides electrons for assembly of cytosolic iron-sulfur cluster proteins. The protein is NADPH-dependent diflavin oxidoreductase 1 (redC) of Dictyostelium discoideum (Social amoeba).